The chain runs to 486 residues: Protein nucleotidyltransferase YdiU (486 aa).

ATP is bound by residues glycine 90, glycine 92, arginine 93, lysine 113, aspartate 125, glycine 126, arginine 176, and arginine 183. Aspartate 252 functions as the Proton acceptor in the catalytic mechanism. Positions 253 and 262 each coordinate Mg(2+). Aspartate 262 provides a ligand contact to ATP.

It belongs to the SELO family. Mg(2+) serves as cofactor. Requires Mn(2+) as cofactor.

The enzyme catalyses L-seryl-[protein] + ATP = 3-O-(5'-adenylyl)-L-seryl-[protein] + diphosphate. It catalyses the reaction L-threonyl-[protein] + ATP = 3-O-(5'-adenylyl)-L-threonyl-[protein] + diphosphate. It carries out the reaction L-tyrosyl-[protein] + ATP = O-(5'-adenylyl)-L-tyrosyl-[protein] + diphosphate. The catalysed reaction is L-histidyl-[protein] + UTP = N(tele)-(5'-uridylyl)-L-histidyl-[protein] + diphosphate. The enzyme catalyses L-seryl-[protein] + UTP = O-(5'-uridylyl)-L-seryl-[protein] + diphosphate. It catalyses the reaction L-tyrosyl-[protein] + UTP = O-(5'-uridylyl)-L-tyrosyl-[protein] + diphosphate. In terms of biological role, nucleotidyltransferase involved in the post-translational modification of proteins. It can catalyze the addition of adenosine monophosphate (AMP) or uridine monophosphate (UMP) to a protein, resulting in modifications known as AMPylation and UMPylation. The protein is Protein nucleotidyltransferase YdiU of Pseudomonas putida (strain ATCC 700007 / DSM 6899 / JCM 31910 / BCRC 17059 / LMG 24140 / F1).